Consider the following 138-residue polypeptide: Ostreolysin A6 (138 aa).

The protein belongs to the aegerolysin family. As to quaternary structure, monomer.

Functionally, has hemolytic activity against bovine erythrocytes at nanomolar concentrations in vitro. Promotes active pleurotolysin B (PlyB)-dependent permeabilization of membranes rich in cholesterol and sphingomyelin. May play an important role in the initial phase of fungal fruiting. In Pleurotus ostreatus (Oyster mushroom), this protein is Ostreolysin A6 (OlyA6).